A 644-amino-acid chain; its full sequence is Threonine--tRNA ligase (644 aa).

The TGS domain maps to 1-62 (MSFSITLPDG…DSDSEVAIIT (62 aa)). The tract at residues 240–538 (DHRTIGRDLD…LTEIYKGAFP (299 aa)) is catalytic. 3 residues coordinate Zn(2+): cysteine 334, histidine 385, and histidine 515.

Belongs to the class-II aminoacyl-tRNA synthetase family. As to quaternary structure, homodimer. Requires Zn(2+) as cofactor.

The protein localises to the cytoplasm. The catalysed reaction is tRNA(Thr) + L-threonine + ATP = L-threonyl-tRNA(Thr) + AMP + diphosphate + H(+). In terms of biological role, catalyzes the attachment of threonine to tRNA(Thr) in a two-step reaction: L-threonine is first activated by ATP to form Thr-AMP and then transferred to the acceptor end of tRNA(Thr). Also edits incorrectly charged L-seryl-tRNA(Thr). The sequence is that of Threonine--tRNA ligase from Lactobacillus helveticus (strain DPC 4571).